Here is a 218-residue protein sequence, read N- to C-terminus: Small ribosomal subunit protein uS3 (218 aa).

Residues 38 to 106 form the KH type-2 domain; sequence LRSDLKKKLM…PVHLNIEEVK (69 aa).

The protein belongs to the universal ribosomal protein uS3 family. Part of the 30S ribosomal subunit. Forms a tight complex with proteins S10 and S14.

Functionally, binds the lower part of the 30S subunit head. Binds mRNA in the 70S ribosome, positioning it for translation. The polypeptide is Small ribosomal subunit protein uS3 (Legionella pneumophila (strain Lens)).